The chain runs to 318 residues: NADH-ubiquinone oxidoreductase chain 1 (318 aa).

A run of 8 helical transmembrane segments spans residues 2–22 (FMINLFSLIIPILLAVAFLTL), 69–89 (FMFTIAPALALTLALTMWVPL), 102–122 (MLFILAMSSLAVYSILWSGWA), 146–166 (LAIILLPTMLMNGSFTLSTLT), 171–191 (HLWLIFPLWPLAMMWFVSTLA), 231–251 (IIMMNALTAILFLGTFHNPLL), 253–273 (EAHTINLILKTSLLTICFLWV), and 294–314 (LPLTLALCMWHMSIPIMLACI).

Belongs to the complex I subunit 1 family. Core subunit of respiratory chain NADH dehydrogenase (Complex I) which is composed of 45 different subunits.

Its subcellular location is the mitochondrion inner membrane. It carries out the reaction a ubiquinone + NADH + 5 H(+)(in) = a ubiquinol + NAD(+) + 4 H(+)(out). Functionally, core subunit of the mitochondrial membrane respiratory chain NADH dehydrogenase (Complex I) which catalyzes electron transfer from NADH through the respiratory chain, using ubiquinone as an electron acceptor. Essential for the catalytic activity and assembly of complex I. In Dugong dugon (Dugong), this protein is NADH-ubiquinone oxidoreductase chain 1 (MT-ND1).